Reading from the N-terminus, the 173-residue chain is NADH-ubiquinone oxidoreductase chain 6 (173 aa).

The next 5 helical transmembrane spans lie at 1 to 21 (MTYFMLFLGLCFVLGGLGVAS), 27 to 47 (YGVVGLVLASVVGCGWLLSLG), 48 to 68 (VSFVSLVLFMVYLGGMLVVFV), 87 to 107 (VVGYGVSFIAVLVVGVVIGGL), and 139 to 159 (CGVGMFLVAGWGLLLTLFVVL).

It belongs to the complex I subunit 6 family.

It localises to the mitochondrion membrane. The catalysed reaction is a ubiquinone + NADH + 5 H(+)(in) = a ubiquinol + NAD(+) + 4 H(+)(out). In terms of biological role, core subunit of the mitochondrial membrane respiratory chain NADH dehydrogenase (Complex I) that is believed to belong to the minimal assembly required for catalysis. Complex I functions in the transfer of electrons from NADH to the respiratory chain. The immediate electron acceptor for the enzyme is believed to be ubiquinone. The chain is NADH-ubiquinone oxidoreductase chain 6 (MT-ND6) from Synthliboramphus hypoleucus (Guadalupe murrelet).